The sequence spans 144 residues: Large-conductance mechanosensitive channel (144 aa).

2 consecutive transmembrane segments (helical) span residues 21–41 and 76–96; these read VGII…ANVI and GIFL…FCII. Residues 105-144 form a disordered region; sequence QRGGKTRRAVQTECGRDAAYRDPRSLETTKQRHGAGYNDD. The segment covering 118 to 134 has biased composition (basic and acidic residues); sequence CGRDAAYRDPRSLETTK.

It belongs to the MscL family. Homopentamer.

The protein localises to the cell inner membrane. Its function is as follows. Channel that opens in response to stretch forces in the membrane lipid bilayer. May participate in the regulation of osmotic pressure changes within the cell. The polypeptide is Large-conductance mechanosensitive channel (Sodalis glossinidius (strain morsitans)).